A 274-amino-acid chain; its full sequence is Large ribosomal subunit protein uL2 (274 aa).

2 disordered regions span residues 1–23 and 222–242; these read MAIKIYRPTSPGRRHHSVSSFEE and GSAMSPNNHPHGGGECRSPIG.

The protein belongs to the universal ribosomal protein uL2 family. Part of the 50S ribosomal subunit. Forms a bridge to the 30S subunit in the 70S ribosome.

Functionally, one of the primary rRNA binding proteins. Required for association of the 30S and 50S subunits to form the 70S ribosome, for tRNA binding and peptide bond formation. It has been suggested to have peptidyltransferase activity; this is somewhat controversial. Makes several contacts with the 16S rRNA in the 70S ribosome. The chain is Large ribosomal subunit protein uL2 from Dehalococcoides mccartyi (strain ATCC BAA-2266 / KCTC 15142 / 195) (Dehalococcoides ethenogenes (strain 195)).